We begin with the raw amino-acid sequence, 88 residues long: RNA-binding protein Hfq (88 aa).

One can recognise a Sm domain in the interval 9-68; sequence DPFLNALRRERIPVSIYLVNGIKLQGQIESFDQFVILLKNTVNQMVYKHAISTVVPARAV. The segment at 66-88 is disordered; the sequence is RAVSHHSASDRPQGERPQEKTEE. The span at 72 to 88 shows a compositional bias: basic and acidic residues; sequence SASDRPQGERPQEKTEE.

This sequence belongs to the Hfq family. Homohexamer.

In terms of biological role, RNA chaperone that binds small regulatory RNA (sRNAs) and mRNAs to facilitate mRNA translational regulation in response to envelope stress, environmental stress and changes in metabolite concentrations. Also binds with high specificity to tRNAs. The protein is RNA-binding protein Hfq of Aliivibrio fischeri (strain ATCC 700601 / ES114) (Vibrio fischeri).